We begin with the raw amino-acid sequence, 879 residues long: Alanine--tRNA ligase (879 aa).

Zn(2+) contacts are provided by His566, His570, Cys668, and His672.

It belongs to the class-II aminoacyl-tRNA synthetase family. Requires Zn(2+) as cofactor.

The protein localises to the cytoplasm. It catalyses the reaction tRNA(Ala) + L-alanine + ATP = L-alanyl-tRNA(Ala) + AMP + diphosphate. Catalyzes the attachment of alanine to tRNA(Ala) in a two-step reaction: alanine is first activated by ATP to form Ala-AMP and then transferred to the acceptor end of tRNA(Ala). Also edits incorrectly charged Ser-tRNA(Ala) and Gly-tRNA(Ala) via its editing domain. The sequence is that of Alanine--tRNA ligase from Halalkalibacterium halodurans (strain ATCC BAA-125 / DSM 18197 / FERM 7344 / JCM 9153 / C-125) (Bacillus halodurans).